A 357-amino-acid polypeptide reads, in one-letter code: Chaperone protein DnaJ (357 aa).

The J domain occupies 4-69; the sequence is DYYAILGVDR…QKRKQYDETG (66 aa). Residues 132 to 213 form a CR-type zinc finger; that stretch reads GASKNVKYRR…CHGTGTVSKN (82 aa). Zn(2+) is bound by residues cysteine 145, cysteine 148, cysteine 161, cysteine 164, cysteine 187, cysteine 190, cysteine 201, and cysteine 204. CXXCXGXG motif repeat units lie at residues 145–152, 161–168, 187–194, and 201–208; these read CEHCSGTG, CPTCHGSG, CRTCHGRG, and CTVCHGTG.

Belongs to the DnaJ family. As to quaternary structure, homodimer. Zn(2+) is required as a cofactor.

The protein localises to the cytoplasm. Its function is as follows. Participates actively in the response to hyperosmotic and heat shock by preventing the aggregation of stress-denatured proteins and by disaggregating proteins, also in an autonomous, DnaK-independent fashion. Unfolded proteins bind initially to DnaJ; upon interaction with the DnaJ-bound protein, DnaK hydrolyzes its bound ATP, resulting in the formation of a stable complex. GrpE releases ADP from DnaK; ATP binding to DnaK triggers the release of the substrate protein, thus completing the reaction cycle. Several rounds of ATP-dependent interactions between DnaJ, DnaK and GrpE are required for fully efficient folding. Also involved, together with DnaK and GrpE, in the DNA replication of plasmids through activation of initiation proteins. The sequence is that of Chaperone protein DnaJ from Picrophilus torridus (strain ATCC 700027 / DSM 9790 / JCM 10055 / NBRC 100828 / KAW 2/3).